Consider the following 132-residue polypeptide: Ribonuclease P protein component (132 aa).

The protein belongs to the RnpA family. As to quaternary structure, consists of a catalytic RNA component (M1 or rnpB) and a protein subunit.

It catalyses the reaction Endonucleolytic cleavage of RNA, removing 5'-extranucleotides from tRNA precursor.. In terms of biological role, RNaseP catalyzes the removal of the 5'-leader sequence from pre-tRNA to produce the mature 5'-terminus. It can also cleave other RNA substrates such as 4.5S RNA. The protein component plays an auxiliary but essential role in vivo by binding to the 5'-leader sequence and broadening the substrate specificity of the ribozyme. The chain is Ribonuclease P protein component from Micrococcus luteus (strain ATCC 4698 / DSM 20030 / JCM 1464 / CCM 169 / CCUG 5858 / IAM 1056 / NBRC 3333 / NCIMB 9278 / NCTC 2665 / VKM Ac-2230) (Micrococcus lysodeikticus).